A 484-amino-acid chain; its full sequence is Glycogen synthase 2 (484 aa).

Lysine 15 lines the ADP-alpha-D-glucose pocket.

Belongs to the glycosyltransferase 1 family. Bacterial/plant glycogen synthase subfamily.

The catalysed reaction is [(1-&gt;4)-alpha-D-glucosyl](n) + ADP-alpha-D-glucose = [(1-&gt;4)-alpha-D-glucosyl](n+1) + ADP + H(+). It functions in the pathway glycan biosynthesis; glycogen biosynthesis. Synthesizes alpha-1,4-glucan chains using ADP-glucose. This is Glycogen synthase 2 from Geobacter metallireducens (strain ATCC 53774 / DSM 7210 / GS-15).